A 152-amino-acid chain; its full sequence is Ribonuclease pancreatic gamma-type (152 aa).

An N-terminal signal peptide occupies residues 1–25 (MGLEKSLFLFSLLVLVLGWVQPSLG). Substrate contacts are provided by lysine 35 and arginine 38. The active-site Proton acceptor is histidine 40. 4 disulfide bridges follow: cysteine 54/cysteine 112, cysteine 68/cysteine 123, cysteine 86/cysteine 138, and cysteine 93/cysteine 100. Substrate-binding positions include 69–73 (KSMNT), lysine 94, and arginine 113. Catalysis depends on histidine 147, which acts as the Proton donor.

Belongs to the pancreatic ribonuclease family. As to quaternary structure, monomer.

Its subcellular location is the secreted. It catalyses the reaction an [RNA] containing cytidine + H2O = an [RNA]-3'-cytidine-3'-phosphate + a 5'-hydroxy-ribonucleotide-3'-[RNA].. It carries out the reaction an [RNA] containing uridine + H2O = an [RNA]-3'-uridine-3'-phosphate + a 5'-hydroxy-ribonucleotide-3'-[RNA].. Its function is as follows. Endonuclease that catalyzes the cleavage of RNA on the 3' side of pyrimidine nucleotides. Acts on single-stranded and double-stranded RNA. This chain is Ribonuclease pancreatic gamma-type, found in Rattus norvegicus (Rat).